The primary structure comprises 160 residues: uncharacterized protein (160 aa).

Over 1 to 33 (MPLRPCRHHQGFLPKKQWRAKFPQLIVLMGRVA) the chain is Extracellular. A helical transmembrane segment spans residues 34–54 (AEELLPAVAVAAVVVAVVVAV). Over 55 to 68 (ERVVPLLFVHRPDS) the chain is Cytoplasmic. A helical membrane pass occupies residues 69–89 (FFLIFFFQSCFVCCCCCCSCS). The Extracellular portion of the chain corresponds to 90-119 (TSLKAYSSEKEKQKYGKRGNGNTPLVQRLV). Residues 120 to 140 (TLSYLALLILVLSIELLTWFV) form a helical membrane-spanning segment. Over 141–160 (KKQRTGNKKQKDKEKNALLL) the chain is Cytoplasmic.

It is found in the membrane. This is an uncharacterized protein from Saccharomyces cerevisiae (strain ATCC 204508 / S288c) (Baker's yeast).